The primary structure comprises 145 residues: Basic phospholipase A2 BFPA (145 aa).

The N-terminal stretch at 1–27 (MNPAHLLVLLAVCVSLLGAANIPPQSL) is a signal peptide. 7 cysteine pairs are disulfide-bonded: C38–C97, C52–C144, C54–C70, C69–C125, C76–C118, C86–C111, and C104–C116. Residues Y53, G55, and G57 each coordinate Ca(2+). The active site involves H73. Residue D74 participates in Ca(2+) binding. Residue D119 is part of the active site.

It belongs to the phospholipase A2 family. Group I subfamily. D49 sub-subfamily. As to quaternary structure, homodimer; disulfide-linked. The cofactor is Ca(2+). Expressed by the venom gland.

It localises to the secreted. It catalyses the reaction a 1,2-diacyl-sn-glycero-3-phosphocholine + H2O = a 1-acyl-sn-glycero-3-phosphocholine + a fatty acid + H(+). In terms of biological role, snake venom phospholipase A2 (PLA2) that inhibits blood coagulation and shows bactericidal activities against both Gram-negative and -positive bacteria (E.coli, MIC=0.4 uM and S.aureus, MIC=0.1 uM). PLA2 catalyzes the calcium-dependent hydrolysis of the 2-acyl groups in 3-sn-phosphoglycerides. This is Basic phospholipase A2 BFPA from Bungarus fasciatus (Banded krait).